The chain runs to 920 residues: Periplasmic nitrate reductase (920 aa).

The tat-type signal signal peptide spans 1-29 (MNRRDFIKSTAAAAACASAGIALPANLNA). One can recognise a 4Fe-4S Mo/W bis-MGD-type domain in the interval 35–91 (WRWDKAVCRFCGTGCGIMVATKNGKIVAVKGDPEAPVNRGLNCIKGYFNAKIMYGDD). [4Fe-4S] cluster is bound by residues C42, C45, C49, and C77. Residues K79, Q147, N172, C176, 209–216 (WGANMAEM), M416, Q420, N526, 551–552 (SD), K574, D601, and 810–819 (TGRVLEHWHS) each bind Mo-bis(molybdopterin guanine dinucleotide). W886 contacts substrate. Mo-bis(molybdopterin guanine dinucleotide) contacts are provided by N894 and K911.

Belongs to the prokaryotic molybdopterin-containing oxidoreductase family. NasA/NapA/NarB subfamily. In terms of assembly, component of the periplasmic nitrate reductase NapAB complex composed of NapA and NapB. [4Fe-4S] cluster is required as a cofactor. The cofactor is Mo-bis(molybdopterin guanine dinucleotide). Post-translationally, predicted to be exported by the Tat system. The position of the signal peptide cleavage has not been experimentally proven.

It localises to the periplasm. The catalysed reaction is 2 Fe(II)-[cytochrome] + nitrate + 2 H(+) = 2 Fe(III)-[cytochrome] + nitrite + H2O. In terms of biological role, catalytic subunit of the periplasmic nitrate reductase complex NapAB. Receives electrons from NapB and catalyzes the reduction of nitrate to nitrite. This Campylobacter hominis (strain ATCC BAA-381 / DSM 21671 / CCUG 45161 / LMG 19568 / NCTC 13146 / CH001A) protein is Periplasmic nitrate reductase.